Here is a 122-residue protein sequence, read N- to C-terminus: Acidic phospholipase A2 (122 aa).

7 disulfides stabilise this stretch: cysteine 26–cysteine 115, cysteine 28–cysteine 44, cysteine 43–cysteine 95, cysteine 49–cysteine 122, cysteine 50–cysteine 88, cysteine 57–cysteine 81, and cysteine 75–cysteine 86. Residues tyrosine 27, glycine 29, and glycine 31 each coordinate Ca(2+). Histidine 47 is an active-site residue. Ca(2+) is bound at residue aspartate 48. Aspartate 89 is an active-site residue.

This sequence belongs to the phospholipase A2 family. Group II subfamily. D49 sub-subfamily. The cofactor is Ca(2+). Contains 7 disulfide bonds. In terms of tissue distribution, expressed by the venom gland.

It localises to the secreted. It catalyses the reaction a 1,2-diacyl-sn-glycero-3-phosphocholine + H2O = a 1-acyl-sn-glycero-3-phosphocholine + a fatty acid + H(+). Its function is as follows. Snake venom phospholipase A2 (PLA2) that displays low systemic toxicity and causes severe symptoms only at very high concentrations (15 mg/kg). Has neither coagulant nor anticoagulant activity. PLA2 catalyzes the calcium-dependent hydrolysis of the 2-acyl groups in 3-sn-phosphoglycerides. This chain is Acidic phospholipase A2, found in Bothrops ammodytoides (Yararanata).